Here is a 185-residue protein sequence, read N- to C-terminus: Intraflagellar transport protein 22 homolog (185 aa).

GTP is bound by residues 10–17 (GPCESGKT), 63–67 (DCGGD), and 123–126 (HKPG). The residue at position 137 (S137) is a Phosphoserine.

The protein belongs to the small GTPase superfamily. Rab family. In terms of assembly, component of the IFT complex B, at least composed of IFT20, IFT22, IFT25, IFT27, IFT46, IFT52, TRAF3IP1/IFT54, IFT57, IFT74, IFT80, IFT81, and IFT88. Interacts with IFT88. Interacts with CFAP61.

Its subcellular location is the cell projection. It is found in the cilium. Its function is as follows. Small GTPase-like component of the intraflagellar transport (IFT) complex B. The polypeptide is Intraflagellar transport protein 22 homolog (Ift22) (Mus musculus (Mouse)).